Here is a 715-residue protein sequence, read N- to C-terminus: MSVAHADDADDYSRPTGESYHAEKALPSGDFYTGQWRDNLPHGHGKYLWTDGCMYVGDWHRGKTMGKGRFSWPSGATYEGDFKNGYMDGKGTYIDSSGDLYRGSWVMNLRHGQGTKSYVNGDCYDGEWRRGLQDGHGRYQWKNENHYIGQWKNGLMNGNGTMIWSNGNRYDGSWEDGAPKGNGTFRWSDGSFYVGVWSKDPKEQNGTYYPSTSSGNFDWQPQQVFYVDLSECVVCTCQRIPVLPSQKMPVWYGASEQSSSGNRTKNSERPRRRSVDGRVSNGEMELRSNGSGYLQVDDNAESTRSSLGPLRIQPAKKQGQTISKGHKNYELMLNLQLGIRHSVGRPAPATSLDLKASAFDPKEKLWTKFPSEGSKYTPPHQSCEFKWKDYCPVVFRTLRKLFSVDAADYMLSICGNDALRELSSPGKSGSFFYLTNDDRYMIKTMKKAETKVLIRMLPAYYNHVRACENTLVTKFFGLHCVKLTGTAQKKVRFVIMGNLFCTGHSIHRRFDLKGSSHGRLTTKPESEIDPNTTLKDLDLNFAFRLQKNWFQEFCRQVDRDCEFLEQERIMDYSLLVGLHFREAAIKDSATPTSGARTPTGNSETRLSRAEMDRFLLDASKLASIKLGINMPARVERTARRSDCENQLVGDPTGEFYDVIVYFGIIDILQDYDISKKLEHAYKSMQYDPTSISAVDPKQYSRRFRDFIFRVFVEDA.

Residues 1–13 (MSVAHADDADDYS) are compositionally biased toward basic and acidic residues. Positions 1–21 (MSVAHADDADDYSRPTGESYH) are disordered. MORN repeat units follow at residues 32-54 (YTGQ…DGCM), 55-77 (YVGD…SGAT), 78-100 (YEGD…SGDL), 101-123 (YRGS…NGDC), 124-146 (YDGE…NENH), 147-169 (YIGQ…NGNR), 170-192 (YDGS…DGSF), and 193-214 (YVGV…STSS). Positions 253–306 (GASEQSSSGNRTKNSERPRRRSVDGRVSNGEMELRSNGSGYLQVDDNAESTRSS) are disordered. The segment covering 255-264 (SEQSSSGNRT) has biased composition (polar residues). Residues 265–276 (KNSERPRRRSVD) are compositionally biased toward basic and acidic residues. Positions 321–711 (TISKGHKNYE…RFRDFIFRVF (391 aa)) constitute a PIPK domain. Residues 671–692 (YDISKKLEHAYKSMQYDPTSIS) are activation loop.

The catalysed reaction is a 1,2-diacyl-sn-glycero-3-phospho-(1D-myo-inositol 4-phosphate) + ATP = a 1,2-diacyl-sn-glycero-3-phospho-(1D-myo-inositol-4,5-bisphosphate) + ADP + H(+). The chain is Phosphatidylinositol 4-phosphate 5-kinase 6 (PIP5K6) from Arabidopsis thaliana (Mouse-ear cress).